The following is a 125-amino-acid chain: Cyclin-dependent protein kinase inhibitor SMR16 (125 aa).

Functionally, probable cyclin-dependent protein kinase (CDK) inhibitor that functions as a repressor of mitosis in the endoreduplication cell cycle. This chain is Cyclin-dependent protein kinase inhibitor SMR16, found in Arabidopsis thaliana (Mouse-ear cress).